Reading from the N-terminus, the 620-residue chain is Kelch-like protein 8 (620 aa).

Over residues 1 to 10 (MASDSMSSKQ) the composition is skewed to polar residues. The interval 1 to 35 (MASDSMSSKQARNHITKGKRQQQHQQIKNRSSISD) is disordered. At alanine 2 the chain carries N-acetylalanine. The segment covering 11–22 (ARNHITKGKRQQ) has biased composition (basic residues). The segment covering 23 to 34 (QHQQIKNRSSIS) has biased composition (polar residues). Positions 67–134 (CDVTLKVGSK…VYSSRLTLTV (68 aa)) constitute a BTB domain. The BACK domain occupies 169 to 270 (CLAVRAFAES…LPVDFLMGVV (102 aa)). 6 Kelch repeats span residues 319-366 (VLFC…SVEG), 367-413 (KVYA…SLGG), 415-460 (IYAI…ALVN), 462-507 (VYAV…KLHG), 508-554 (CLYV…TVMG), and 556-601 (IFAV…VCSC).

Component of the BCR(KLHL8) E3 ubiquitin ligase complex, at least composed of CUL3, KLHL8 and RBX1. Interacts with RAPSN.

The protein operates within protein modification; protein ubiquitination. Functionally, substrate-specific adapter of a BCR (BTB-CUL3-RBX1) E3 ubiquitin ligase complex required for The BCR(KLHL8) ubiquitin ligase complex mediates ubiquitination and degradation of RAPSN. The chain is Kelch-like protein 8 (KLHL8) from Homo sapiens (Human).